Reading from the N-terminus, the 255-residue chain is Ly6/PLAUR domain-containing protein 8 (255 aa).

The first 20 residues, 1-20, serve as a signal peptide directing secretion; the sequence is MRGVFIAGVIAAFAITVVDS. Asparagine 22, asparagine 30, asparagine 53, asparagine 72, asparagine 76, asparagine 105, asparagine 115, asparagine 128, asparagine 154, asparagine 169, asparagine 179, asparagine 200, and asparagine 210 each carry an N-linked (GlcNAc...) asparagine glycan. Positions 121-170 constitute a UPAR/Ly6 domain; the sequence is CMSCYGHNKTLCEEKPQKCYEGEQCVFIIAEMVNGSGRVELKGCSDISNS. A lipid anchor (GPI-anchor amidated serine) is attached at serine 233. Positions 234–255 are cleaved as a propeptide — removed in mature form; that stretch reads MGTKASFTSSIFGSLLLLKLLF.

This sequence belongs to the CNF-like-inhibitor family. In terms of processing, highly N-glycosylated. Not O-glycosylated. Post-translationally, GPI-anchored. The GPI-anchor is cleaved, leading to secretion into the colonic lumen. Specifically present in enterocytes located at the uppermost epithelial layer of the colon (at protein level). Exclusively expressed in the large intestine: specifically expressed on the apical surface of epithelial cells located at the uppermost layer of the colonic gland.

The protein resides in the cell membrane. The protein localises to the secreted. Secreted protein specifically required to prevent invasion of Gram-negative bacteria in the inner mucus layer of the colon epithelium, a portion of the large intestine which is free of commensal microbiota. Prevents invasion of flagellated microbiota by binding to the flagellum of bacteria, such as P.mirabilis, thereby inhibiting bacterial motility in the intestinal lumen. Segregation of intestinal bacteria and epithelial cells in the colon is required to preserve intestinal homeostasis. This chain is Ly6/PLAUR domain-containing protein 8, found in Mus musculus (Mouse).